A 443-amino-acid polypeptide reads, in one-letter code: uncharacterized protein (443 aa).

This is an uncharacterized protein from Saccharomyces cerevisiae (strain ATCC 204508 / S288c) (Baker's yeast).